We begin with the raw amino-acid sequence, 191 residues long: Calcium-binding protein L (191 aa).

The N-myristoyl glycine moiety is linked to residue Gly-2. EF-hand domains are found at residues 25-59 (EQVS…RFKD), 60-95 (YDDA…ITKS), and 96-131 (PVSD…ALNT). The Ca(2+) site is built by Asp-73, Asp-75, Asn-77, Arg-79, and Glu-84.

Belongs to the recoverin family.

This is Calcium-binding protein L (cbpL) from Dictyostelium discoideum (Social amoeba).